The sequence spans 359 residues: Pyruvate dehydrogenase E1 component subunit beta, mitochondrial (359 aa).

The N-terminal 30 residues, 1 to 30 (MAVVAGLVRGPLRQASGLLKRRFHRSAPAA), are a transit peptide targeting the mitochondrion. At tyrosine 67 the chain carries Phosphotyrosine. Thiamine diphosphate is bound at residue glutamate 89. K(+) contacts are provided by isoleucine 142, alanine 190, isoleucine 191, aspartate 193, and asparagine 195. Lysine 354 carries the post-translational modification N6-acetyllysine.

Heterotetramer of two PDHA1 and two PDHB subunits. The heterotetramer interacts with DLAT, and is part of the multimeric pyruvate dehydrogenase complex that contains multiple copies of pyruvate dehydrogenase (E1), dihydrolipoamide acetyltransferase (DLAT, E2) and lipoamide dehydrogenase (DLD, E3). These subunits are bound to an inner core composed of about 48 DLAT and 12 PDHX molecules. Interacts with DLAT. Requires thiamine diphosphate as cofactor.

Its subcellular location is the mitochondrion matrix. It carries out the reaction N(6)-[(R)-lipoyl]-L-lysyl-[protein] + pyruvate + H(+) = N(6)-[(R)-S(8)-acetyldihydrolipoyl]-L-lysyl-[protein] + CO2. Functionally, the pyruvate dehydrogenase complex catalyzes the overall conversion of pyruvate to acetyl-CoA and CO(2), and thereby links the glycolytic pathway to the tricarboxylic cycle. This Mus musculus (Mouse) protein is Pyruvate dehydrogenase E1 component subunit beta, mitochondrial (Pdhb).